A 306-amino-acid chain; its full sequence is Acetyl-coenzyme A carboxylase carboxyl transferase subunit beta (306 aa).

Residues 27–296 (LWHKCPSCDA…PRFVAPVIEP (270 aa)) form the CoA carboxyltransferase N-terminal domain. Zn(2+)-binding residues include cysteine 31, cysteine 34, cysteine 50, and cysteine 53. The C4-type zinc finger occupies 31–53 (CPSCDAVLYRPELEKTLDVCPKC).

It belongs to the AccD/PCCB family. In terms of assembly, acetyl-CoA carboxylase is a heterohexamer composed of biotin carboxyl carrier protein (AccB), biotin carboxylase (AccC) and two subunits each of ACCase subunit alpha (AccA) and ACCase subunit beta (AccD). Requires Zn(2+) as cofactor.

It localises to the cytoplasm. The enzyme catalyses N(6)-carboxybiotinyl-L-lysyl-[protein] + acetyl-CoA = N(6)-biotinyl-L-lysyl-[protein] + malonyl-CoA. Its pathway is lipid metabolism; malonyl-CoA biosynthesis; malonyl-CoA from acetyl-CoA: step 1/1. Component of the acetyl coenzyme A carboxylase (ACC) complex. Biotin carboxylase (BC) catalyzes the carboxylation of biotin on its carrier protein (BCCP) and then the CO(2) group is transferred by the transcarboxylase to acetyl-CoA to form malonyl-CoA. This chain is Acetyl-coenzyme A carboxylase carboxyl transferase subunit beta, found in Pseudomonas syringae pv. tomato (strain ATCC BAA-871 / DC3000).